Here is a 103-residue protein sequence, read N- to C-terminus: Small ribosomal subunit protein uS10 (103 aa).

Belongs to the universal ribosomal protein uS10 family. As to quaternary structure, part of the 30S ribosomal subunit.

Involved in the binding of tRNA to the ribosomes. This Acinetobacter baumannii (strain AB307-0294) protein is Small ribosomal subunit protein uS10.